A 394-amino-acid chain; its full sequence is 1-deoxy-D-xylulose 5-phosphate reductoisomerase (394 aa).

Residues Thr11, Gly12, Ser13, Ile14, Gly37, Asn39, and Asn126 each coordinate NADPH. A 1-deoxy-D-xylulose 5-phosphate-binding site is contributed by Lys127. Glu128 is a binding site for NADPH. Asp152 serves as a coordination point for Mn(2+). Residues Ser153, Glu154, Ser178, and His201 each coordinate 1-deoxy-D-xylulose 5-phosphate. Glu154 provides a ligand contact to Mn(2+). Gly207 is an NADPH binding site. Positions 214, 219, 220, and 223 each coordinate 1-deoxy-D-xylulose 5-phosphate. Residue Glu223 coordinates Mn(2+).

The protein belongs to the DXR family. Requires Mg(2+) as cofactor. It depends on Mn(2+) as a cofactor.

The catalysed reaction is 2-C-methyl-D-erythritol 4-phosphate + NADP(+) = 1-deoxy-D-xylulose 5-phosphate + NADPH + H(+). It functions in the pathway isoprenoid biosynthesis; isopentenyl diphosphate biosynthesis via DXP pathway; isopentenyl diphosphate from 1-deoxy-D-xylulose 5-phosphate: step 1/6. Its function is as follows. Catalyzes the NADPH-dependent rearrangement and reduction of 1-deoxy-D-xylulose-5-phosphate (DXP) to 2-C-methyl-D-erythritol 4-phosphate (MEP). In Synechocystis sp. (strain ATCC 27184 / PCC 6803 / Kazusa), this protein is 1-deoxy-D-xylulose 5-phosphate reductoisomerase.